Reading from the N-terminus, the 309-residue chain is Dicarboxylate carrier SLC25A8 (309 aa).

The Mitochondrial intermembrane portion of the chain corresponds to 1-16; sequence MVGFKATDVPPTATVK. Solcar repeat units lie at residues 11–106, 114–203, and 212–297; these read PTAT…VKQF, ASIG…IKDA, and DDLP…LKRA. The tract at residues 16–63 is important for interaction with long-chain fatty acids; it reads KFLGAGTAACIADLITFPLDTAKVRLQIQGESQGPVRATASAQYRGVM. Residues 17 to 40 traverse the membrane as a helical segment; that stretch reads FLGAGTAACIADLITFPLDTAKVR. The Mitochondrial matrix portion of the chain corresponds to 41–77; the sequence is LQIQGESQGPVRATASAQYRGVMGTILTMVRTEGPRS. Residues 78–103 traverse the membrane as a helical segment; the sequence is LYNGLVAGLQRQMSFASVRIGLYDSV. At 104 to 119 the chain is on the mitochondrial intermembrane side; sequence KQFYTKGSEHASIGSR. A helical transmembrane segment spans residues 120–145; the sequence is LLAGSTTGALAVAVAQPTDVVKVRFQ. Residues 146 to 173 are Mitochondrial matrix-facing; it reads AQARAGGGRRYQSTVNAYKTIAREEGFR. The chain crosses the membrane as a helical span at residues 174–199; the sequence is GLWKGTSPNVARNAIVNCAELVTYDL. Residues 200–217 lie on the Mitochondrial intermembrane side of the membrane; that stretch reads IKDALLKANLMTDDLPCH. A helical membrane pass occupies residues 218–242; it reads FTSAFGAGFCTTVIASPVDVVKTRY. Over 243–268 the chain is Mitochondrial matrix; that stretch reads MNSALGQYSSAGHCALTMLQKEGPRA. A helical membrane pass occupies residues 269-294; sequence FYKGFMPSFLRLGSWNVVMFVTYEQL. The interval 278–285 is important for interaction with long-chain fatty acids; it reads LRLGSWNV. At 295–309 the chain is on the mitochondrial intermembrane side; it reads KRALMAACTSREAPF.

Belongs to the mitochondrial carrier (TC 2.A.29) family. Homotetramer. Adopts an asymmetrical dimer of dimers functional form. Widely expressed in adult human tissues, including tissues rich in macrophages. Most expressed in white adipose tissue and skeletal muscle.

Its subcellular location is the mitochondrion inner membrane. It catalyses the reaction L-aspartate(out) + phosphate(in) + H(+)(in) = L-aspartate(in) + phosphate(out) + H(+)(out). The enzyme catalyses oxaloacetate(out) + phosphate(in) + H(+)(in) = oxaloacetate(in) + phosphate(out) + H(+)(out). It carries out the reaction (S)-malate(out) + phosphate(in) + H(+)(in) = (S)-malate(in) + phosphate(out) + H(+)(out). The catalysed reaction is malonate(out) + phosphate(in) + H(+)(in) = malonate(in) + phosphate(out) + H(+)(out). It catalyses the reaction sulfate(out) + phosphate(in) + H(+)(in) = sulfate(in) + phosphate(out) + H(+)(out). The enzyme catalyses (S)-malate(out) = (S)-malate(in). It carries out the reaction L-aspartate(out) = L-aspartate(in). The catalysed reaction is phosphate(in) = phosphate(out). It catalyses the reaction chloride(in) = chloride(out). The enzyme catalyses H(+)(in) = H(+)(out). It carries out the reaction a long-chain fatty acid(out) = a long-chain fatty acid(in). Its activity is regulated as follows. Inhibited by pyridoxal- 5'-phosphate, bathophenanthroline, tannic acid, bromocresol purple, butylmalonate and phenylsuccinate. Proton conductance is activated by cardiolipin and long-chain free fatty acids and inhibited by purine nucleotides ATP and ADP. Chloride ion transporter activity is inhibited by long-chain free fatty acids. Antiporter that exports dicarboxylate intermediates of the Krebs cycle in exchange for phosphate plus a proton across the inner membrane of mitochondria, a process driven by mitochondrial motive force with an overall impact on glycolysis, glutaminolysis and glutathione-dependent redox balance. Continuous export of oxaloacetate and related four-carbon dicarboxylates from mitochondrial matrix into the cytosol negatively regulates the oxidation of acetyl-CoA substrates via the Krebs cycle, lowering the ATP/ADP ratio and reactive oxygen species (ROS) production. May mediate inducible proton entry into the mitochondrial matrix affecting ATP turnover as a protection mechanism against oxidative stress. The proton currents are most likely associated with fatty acid flipping across the inner membrane of mitochondria in a metabolic process regulated by free fatty acids and purine nucleotides. Regulates the use of glucose as a source of energy. Required for glucose-induced DRP1-dependent mitochondrial fission and neuron activation in the ventromedial nucleus of the hypothalamus (VMH). This mitochondrial adaptation mechanism modulates the VMH pool of glucose-excited neurons with an impact on systemic glucose homeostasis. Regulates ROS levels and metabolic reprogramming of macrophages during the resolution phase of inflammation. Attenuates ROS production in response to IL33 to preserve the integrity of the Krebs cycle required for persistent production of itaconate and subsequent GATA3-dependent differentiation of inflammation-resolving alternatively activated macrophages. Can unidirectionally transport anions including L-malate, L-aspartate, phosphate and chloride ions. Does not mediate adaptive thermogenesis. This is Dicarboxylate carrier SLC25A8 (UCP2) from Homo sapiens (Human).